The chain runs to 202 residues: Glycerol-3-phosphate acyltransferase 1 (202 aa).

5 consecutive transmembrane segments (helical) span residues 8 to 28, 85 to 105, 122 to 142, 146 to 166, and 173 to 190; these read AGMI…MSTG, LSLT…IWPL, ILVV…FVLA, QFTL…LIMA, and AGLA…RKNI.

Belongs to the PlsY family. As to quaternary structure, probably interacts with PlsX.

The protein resides in the cell membrane. The catalysed reaction is an acyl phosphate + sn-glycerol 3-phosphate = a 1-acyl-sn-glycero-3-phosphate + phosphate. It participates in lipid metabolism; phospholipid metabolism. Its function is as follows. Catalyzes the transfer of an acyl group from acyl-phosphate (acyl-PO(4)) to glycerol-3-phosphate (G3P) to form lysophosphatidic acid (LPA). This enzyme utilizes acyl-phosphate as fatty acyl donor, but not acyl-CoA or acyl-ACP. The sequence is that of Glycerol-3-phosphate acyltransferase 1 from Desulfitobacterium hafniense (strain Y51).